The chain runs to 310 residues: Homoserine kinase (310 aa).

91–101 lines the ATP pocket; sequence PLARGLGSSAA.

Belongs to the GHMP kinase family. Homoserine kinase subfamily.

The protein resides in the cytoplasm. It catalyses the reaction L-homoserine + ATP = O-phospho-L-homoserine + ADP + H(+). The protein operates within amino-acid biosynthesis; L-threonine biosynthesis; L-threonine from L-aspartate: step 4/5. Catalyzes the ATP-dependent phosphorylation of L-homoserine to L-homoserine phosphate. The chain is Homoserine kinase from Bacillus pumilus (strain SAFR-032).